We begin with the raw amino-acid sequence, 337 residues long: Inositol 2-dehydrogenase 1 (337 aa).

It belongs to the Gfo/Idh/MocA family. As to quaternary structure, homotetramer.

The catalysed reaction is myo-inositol + NAD(+) = scyllo-inosose + NADH + H(+). Its function is as follows. Involved in the oxidation of myo-inositol (MI) to 2-keto-myo-inositol (2KMI or 2-inosose). The sequence is that of Inositol 2-dehydrogenase 1 from Saccharopolyspora erythraea (strain ATCC 11635 / DSM 40517 / JCM 4748 / NBRC 13426 / NCIMB 8594 / NRRL 2338).